We begin with the raw amino-acid sequence, 343 residues long: Acetylglutamate kinase (343 aa).

Residues G98–G99, R120, and N219 contribute to the substrate site.

This sequence belongs to the acetylglutamate kinase family. ArgB subfamily.

The protein localises to the cytoplasm. It carries out the reaction N-acetyl-L-glutamate + ATP = N-acetyl-L-glutamyl 5-phosphate + ADP. Its pathway is amino-acid biosynthesis; L-arginine biosynthesis; N(2)-acetyl-L-ornithine from L-glutamate: step 2/4. Its function is as follows. Catalyzes the ATP-dependent phosphorylation of N-acetyl-L-glutamate. This chain is Acetylglutamate kinase, found in Frankia alni (strain DSM 45986 / CECT 9034 / ACN14a).